The primary structure comprises 648 residues: MTALLELCNVSRSYPSGEEQVAVLKDISLQIHAGEMVAIVGVSGSGKSTLMNILGCLDKPTSGTYRVAGRDVSTLDPDALAQLRREHFGFIFQRYHLLSHLTAAQNVEIPAVYAGIERKKRQARARELLLRLGLSDRVDYPPSQLSGGQQQRVSIARALMNGGQVILADEPTGALDSHSGEEVMAILRQLRDRGHTVIIVTHDPLIAAQAERIIEIHDGKIVHNPPAQEKKREQGVDAAVVNTAPGWRQFASSFREALSMAWLAMAANKMRTLLTMLGIIIGIASVVSIVVVGDAAKQMVLADIRAMGTNTIDIHPGKDFGDDNPQYRQALKYDDLVAIQKQPWVNSATPSVSKSLRLRYGNIDIAVNANGVSGDYFNVYGMSFREGNTFNAVQQQDRAQVVVLDANTRRQLFPNKANVVGEVVLVGNMPVIVIGVAEEKPSMYGNSNLLQVWLPYSTMSDRIMGQSWLNSITVRVKDGVDSDQAEQQLTRLLTLRHGKKDFFTWNMDSVLKTAEKTTYTLQLFLTLVAVISLVVGGIGVMNIMLVSVTERTREIGIRMAVGARASDVLQQFLIEAMLVCLVGGALGISLSMFIAFMLQLFLPGWEIGFSLTALASAFLCSTFTGILFGWLPARNAARLDPVDALARE.

The ABC transporter domain occupies 5–243; sequence LELCNVSRSY…QGVDAAVVNT (239 aa). ATP is bound at residue 41–48; the sequence is GVSGSGKS. 5 helical membrane passes run 273-293, 417-437, 523-543, 578-598, and 611-631; these read LLTM…VVVG, ANVV…IGVA, LFLT…VMNI, LVCL…AFML, and LTAL…FGWL.

It belongs to the ABC transporter superfamily. Macrolide exporter (TC 3.A.1.122) family. As to quaternary structure, homodimer. Part of the tripartite efflux system MacAB-TolC, which is composed of an inner membrane transporter, MacB, a periplasmic membrane fusion protein, MacA, and an outer membrane component, TolC. The complex forms a large protein conduit and can translocate molecules across both the inner and outer membranes. Interacts with MacA.

The protein resides in the cell inner membrane. Part of the tripartite efflux system MacAB-TolC. MacB is a non-canonical ABC transporter that contains transmembrane domains (TMD), which form a pore in the inner membrane, and an ATP-binding domain (NBD), which is responsible for energy generation. Confers resistance against macrolides. The chain is Macrolide export ATP-binding/permease protein MacB from Salmonella paratyphi A (strain ATCC 9150 / SARB42).